The following is a 92-amino-acid chain: RNA-binding protein Hfq (92 aa).

A Sm domain is found at 10–71 (DLFLNQLRKE…ISSIMPSKPI (62 aa)). Positions 73-92 (YMAQAQNNQQASQQSNNNQG) are disordered. A compositionally biased stretch (low complexity) spans 75-92 (AQAQNNQQASQQSNNNQG).

Belongs to the Hfq family. Homohexamer.

In terms of biological role, RNA chaperone that binds small regulatory RNA (sRNAs) and mRNAs to facilitate mRNA translational regulation in response to envelope stress, environmental stress and changes in metabolite concentrations. Also binds with high specificity to tRNAs. This chain is RNA-binding protein Hfq, found in Caldicellulosiruptor bescii (strain ATCC BAA-1888 / DSM 6725 / KCTC 15123 / Z-1320) (Anaerocellum thermophilum).